Here is a 66-residue protein sequence, read N- to C-terminus: Large ribosomal subunit protein bL33B (66 aa).

Belongs to the bacterial ribosomal protein bL33 family.

The protein is Large ribosomal subunit protein bL33B of Synechococcus sp. (strain CC9605).